Consider the following 146-residue polypeptide: VHWSAEEKQLITSIWGKVNVADCGAEALARLLIVYPWTQRFFASFGNLSSATAISGNPNVKAHGKKVLTSFGDAVKNLDNIKGTFAQLSELHCNKLHVDPENFKLLGDILVIVLAAHFGKDFTPECQAAWQKLVRVVAHALARKYH.

Residues 2 to 146 (HWSAEEKQLI…VAHALARKYH (145 aa)) enclose the Globin domain. Histidine 63 and histidine 92 together coordinate heme b.

This sequence belongs to the globin family. As to quaternary structure, heterotetramer of two alpha chains and two beta chains. In terms of tissue distribution, red blood cells.

Involved in oxygen transport from the lung to the various peripheral tissues. In Streptopelia orientalis (Eastern turtle dove), this protein is Hemoglobin subunit beta (HBB).